We begin with the raw amino-acid sequence, 297 residues long: Carbamate kinase (297 aa).

It belongs to the carbamate kinase family.

The protein resides in the cytoplasm. The enzyme catalyses hydrogencarbonate + NH4(+) + ATP = carbamoyl phosphate + ADP + H2O + H(+). It carries out the reaction carbamate + ATP = carbamoyl phosphate + ADP. It catalyses the reaction hydrogencarbonate + NH4(+) = carbamate + H2O + H(+). Its pathway is nitrogen metabolism; (S)-allantoin degradation. Kinase involved in the anaerobic nitrogen utilization via the assimilation of allantoin. Catalyzes the transfer of a phosphate group from carbamoyl phosphate to ADP to produce ATP and leave carbamate, which spontaneously hydrolyzes to ammonia and hydrogencarbonate. The polypeptide is Carbamate kinase (Escherichia coli O6:H1 (strain CFT073 / ATCC 700928 / UPEC)).